A 328-amino-acid polypeptide reads, in one-letter code: Alanine racemase (328 aa).

The Proton acceptor; specific for D-alanine role is filled by Lys33. An N6-(pyridoxal phosphate)lysine modification is found at Lys33. A substrate-binding site is contributed by Arg118. The active-site Proton acceptor; specific for L-alanine is Tyr237. Position 283 (Met283) interacts with substrate.

Belongs to the alanine racemase family. Requires pyridoxal 5'-phosphate as cofactor.

The catalysed reaction is L-alanine = D-alanine. The protein operates within amino-acid biosynthesis; D-alanine biosynthesis; D-alanine from L-alanine: step 1/1. Catalyzes the interconversion of L-alanine and D-alanine. May also act on other amino acids. This Campylobacter jejuni subsp. jejuni serotype O:2 (strain ATCC 700819 / NCTC 11168) protein is Alanine racemase (alr).